The sequence spans 488 residues: MINRQLSRLLLCSILGSTTLISGCALVRKDSAPHQQLKPEQIKLADDIHLASSGWPQAQWWKQLNDPQLDALIQRTLSGSHTLAEAKLREEKAQSQADLLDAGSQLQVAALGMLNRQRVSANGFLSPYAMDAPALGMDGPYYTEATVGLFAGLDLDLWGVHRSAVTAAIGAHNAALAETAAVELSLTTGVAQLYYSMQASYQMLDLLEQTRDVIDYAVKAHQSKVAHGLEAQVPFHGARAQILAVDKQIAAVKGQITETRESLRALIGAGASDMPEIKPVALPRVQTGIPATLSYELLARRPDLQAMRWYVQASLDQVDSARALFYPSFDIKAFFGLDSIHLDTLFKKTSRQFNFIPGLKLPLFDGGRLNANLEGTRAASNMMIERYNQSVLNAVRDVAVNGTRLQTLNDEREMQAERVEATRFTQRAAEAAYQRGLTSRLQATEARLPVLAEEMSLLMLDSRRVIQSIQLMKSLGSGYQAAPVVEKK.

An N-terminal signal peptide occupies residues 1–23 (MINRQLSRLLLCSILGSTTLISG). The N-palmitoyl cysteine moiety is linked to residue C24. C24 carries S-diacylglycerol cysteine lipidation.

Belongs to the outer membrane factor (OMF) (TC 1.B.17) family. As to quaternary structure, could be part of a tripartite efflux system composed of MdtN, MdtO and MdtP.

Its subcellular location is the cell outer membrane. Could be involved in resistance to puromycin, acriflavine and tetraphenylarsonium chloride. This chain is Multidrug resistance outer membrane protein MdtP (mdtP), found in Escherichia coli O157:H7.